Here is a 212-residue protein sequence, read N- to C-terminus: Ribonuclease HII (212 aa).

Residues 28-212 (SIIAGVDEVG…KSFAPIRQVV (185 aa)) form the RNase H type-2 domain. A divalent metal cation is bound by residues aspartate 34, glutamate 35, and aspartate 127.

This sequence belongs to the RNase HII family. Requires Mn(2+) as cofactor. It depends on Mg(2+) as a cofactor.

It is found in the cytoplasm. The enzyme catalyses Endonucleolytic cleavage to 5'-phosphomonoester.. In terms of biological role, endonuclease that specifically degrades the RNA of RNA-DNA hybrids. This Chlamydia caviae (strain ATCC VR-813 / DSM 19441 / 03DC25 / GPIC) (Chlamydophila caviae) protein is Ribonuclease HII.